Here is a 1211-residue protein sequence, read N- to C-terminus: MISIMDRSEIVARENPVITQRVTNLLQTNAPLLFMPIDIHEVRYGAYTLFMYGSLENGYKAEVRIENIPVFFDVQIEFNDTNQLFLKSLLTAENIAYERLETLTQRPVMGYREKEKEFAPYIRIFFKSLYEQRKAITYLNNMGYNTAADDTTCYYRMVSRELKLPLTSWIQLQHYSYEPRGLVHRFSVTPEDLVSYQDDGPTDHSIVMAYDIETYSPVKGTVPDPNQANDVVFMICMRIFWIHSTEPLASTCITMAPCKKSSEWTTILCSSEKNLLLSFAEQFSRWAPDICTGFNDSRYDWPFIVEKSMQHGILEEIFNKMSLFWHQKLDTILKCYYVKEKRVKISAEKSIISSFLHTPGCLPIDVRNMCMQLYPKAEKTSLKAFLENCGLDSKVDLPYHLMWKYYETRDSEKMADVAYYCIIDAQRCQDLLVRHNVIPDRREVGILSYTSLYDCIYYAGGHKVCNMLIAYAIHDEYGRIACSTIARGKREHGKYPGAFVIDPVKGLEQDKPTTGLDFASLYPSLIMAYNFSPEKFVASRDEAKSLMAKGESLHYVSFHFNNRLVEGWFVRHNNVPDKMGLYPKVLIDLLNKRTALKQELKKLGEKKECIHESHPGFKELQFRHAMVDAKQKALKIFMNTFYGEAGNNLSPFFLLPLAGGVTSSGQYNLKLVYNFVINKGYGIKYGDTDSLYITCPDSLYTEVTDAYLNSQKTIKHYEQLCHEKVLLSMKAMSTLCAEVNEYLRQDNGTSYLRMAYEEVLFPVCFTGKKKYYGIAHVNTPNFNTKELFIRGIDIIKQGQTKLTKTIGTRIMEESMKLRRPEDHRPPLIEIVKTVLKDAVVNMKQWNFEDFIQTDAWRPDKDNKAVQIFMSRMHARREQLKKHGAAASQFAEPEPGERFSYVIVEKQVQFDIQGHRTDSSRKGDKMEYVSEAKAKNLPIDILFYINNYVLGLCARFINENEEFQPPDNVSNKDEYAQRRAKSYLQKFVQSIHPKDKSVIKQGIVHRQCYKYVHQEIKKKIGIFADLYKEFFNNTTNPIESFIQSARFMIQYSDGEQKVNHSMKKMVEQRATLASKPAGKPAGNPAGNPAGNALMRAIFTQLITEEKKIVQALYNKGDAIHDLLTYIINNINYKIATFQTKQMLTFEFSSTHVELLLKLNKTWLILAGIHVAKKHLQALLDSYNNEPPSRTFIQQAIEEECGSIKPSCYDFIS.

4 consecutive repeat copies span residues 1074–1077 (KPAG), 1078–1081 (KPAG), 1082–1085 (NPAG), and 1086–1089 (NPAG). Positions 1074–1089 (KPAGKPAGNPAGNPAG) are 4 X 4 AA tandem repeats of [NK]-[P]-A-G.

It belongs to the DNA polymerase type-B family.

It catalyses the reaction DNA(n) + a 2'-deoxyribonucleoside 5'-triphosphate = DNA(n+1) + diphosphate. DNA-directed DNA polymerase involved in viral DNA replication. This is DNA polymerase beta (DPOL) from African swine fever virus (strain Badajoz 1971 Vero-adapted) (Ba71V).